We begin with the raw amino-acid sequence, 594 residues long: Zinc finger protein 37 (594 aa).

Residues 1–253 (MATSEPAESD…KPEKAPGSGK (253 aa)) are disordered. T3 carries the post-translational modification Phosphothreonine. Residues 3–74 (TSEPAESDAV…GKKASPSSLK (72 aa)) form the KRAB domain. Residue S9 is modified to Phosphoserine. The segment covering 10-33 (DAVRAKEWEQLEPVQRDVYKDTKL) has biased composition (basic and acidic residues). Residues 34-46 (ENCSNPASMGNQD) show a composition bias toward polar residues. A compositionally biased stretch (basic and acidic residues) spans 89–111 (QQDDEHREEKQKSQSKLTKEVTL). Polar residues predominate over residues 145–158 (KSSSRGKNSNQNSD). Composition is skewed to basic and acidic residues over residues 159 to 172 (SLKKKPDTANDHRK) and 181 to 234 (VNKD…TGEK). C2H2-type zinc fingers lie at residues 255–277 (YECNHCGKVLSHKQGLLDHQRTH), 283–305 (YECNECGIAFSQKSHLVVHQRTH), 311–324 (YECEQCGKAHGHKH), 339–361 (YKCNECGKTFRHSSNLMQHLRSH), 367–389 (YECKECGKSFRYNSSLTEHVRTH), 395–417 (YECNECGKAFKYGSSLTKHMRIH), 423–445 (FECNECGKTFSKKSHLVIHQRTH), 451–473 (YKCDECGKAFGHSSSLTYHMRTH), 479–501 (FECNQCGKAFKQIEGLTQHQRVH), 507–529 (YECVECGKAFSQKSHLIVHQRTH), 535–557 (FECYECGKAFNAKSQLVIHQRSH), and 563–585 (YECIECGKAFKQNASLTKHMKIH).

The protein belongs to the krueppel C2H2-type zinc-finger protein family. Expressed in testis and brain.

Its subcellular location is the nucleus. Functionally, may have a role in regulating spermiogenesis. In Mus musculus (Mouse), this protein is Zinc finger protein 37 (Zfp37).